Reading from the N-terminus, the 635-residue chain is Threonine--tRNA ligase (635 aa).

Positions 1–144 (MQLLLIHSDY…RTIRLEGAVP (144 aa)) are editing domain. The interval 215-514 (PHVELMRRLE…AEEGKVPNLP (300 aa)) is catalytic. Zn(2+)-binding residues include C307, H359, and H483.

The protein belongs to the class-II aminoacyl-tRNA synthetase family. Homodimer. Zn(2+) is required as a cofactor.

The protein localises to the cytoplasm. It carries out the reaction tRNA(Thr) + L-threonine + ATP = L-threonyl-tRNA(Thr) + AMP + diphosphate + H(+). Its function is as follows. Catalyzes the attachment of threonine to tRNA(Thr) in a two-step reaction: L-threonine is first activated by ATP to form Thr-AMP and then transferred to the acceptor end of tRNA(Thr). Also edits incorrectly charged L-seryl-tRNA(Thr). This is Threonine--tRNA ligase from Methanococcoides burtonii (strain DSM 6242 / NBRC 107633 / OCM 468 / ACE-M).